We begin with the raw amino-acid sequence, 603 residues long: Pyruvate decarboxylase 4 (603 aa).

Substrate is bound by residues D65 and H152. The thiamine pyrophosphate binding stretch occupies residues 430-512 (DSWFNCQKLK…FLINNGGYTI (83 aa)). Mg(2+)-binding residues include D480, N507, and G509. E513 lines the substrate pocket.

The protein belongs to the TPP enzyme family. Homotetramer. The cofactor is a metal cation. Thiamine diphosphate is required as a cofactor. In terms of tissue distribution, expressed in shoots and at lowe levels in roots, flowers and siliques.

The enzyme catalyses a 2-oxocarboxylate + H(+) = an aldehyde + CO2. The sequence is that of Pyruvate decarboxylase 4 (PDC4) from Arabidopsis thaliana (Mouse-ear cress).